The primary structure comprises 108 residues: Large ribosomal subunit protein uL23 (108 aa).

It belongs to the universal ribosomal protein uL23 family. As to quaternary structure, part of the 50S ribosomal subunit. Contacts protein L29, and trigger factor when it is bound to the ribosome.

In terms of biological role, one of the early assembly proteins it binds 23S rRNA. One of the proteins that surrounds the polypeptide exit tunnel on the outside of the ribosome. Forms the main docking site for trigger factor binding to the ribosome. The chain is Large ribosomal subunit protein uL23 from Albidiferax ferrireducens (strain ATCC BAA-621 / DSM 15236 / T118) (Rhodoferax ferrireducens).